The chain runs to 466 residues: MSSSITSGFIDLATVDEIEKYMYGLPDDGVSMAHTLTYFVREFKKSTWFTQVPVPLSRSTGTSDFGQNWSVSISRAGDYLLQTWLRVTIPQVTLAATATPATLSLRWTRNLMHNLIREITISFNDLVGSRLDNYFLDMWSAFTTPASKRNGYDNMIGNISTLTDPVGPGGSLGHTGGTVLNLPISLFFTRDTGVSLPTAALPYNEIQLNFSMRDWKDLLILTDTAITTGNPYQTIDVSKHLGGVAPSLSNVQVWANYAIVSNVERKKMGCGVRDILIEQVQTAPRQNYTPSTNPMPSFDIRFSHAVKVLFFAVRNKTSAAEWSNYGTSSPVVSGTSVNYEPSGSFDPIATTTLIYENSNRLGTMGSDYYSLVSPWYHAPTIPSFIGYHMYSYSLNFFDLDPMGSTNYGKLTNVSIVPHASDAAVKASTGAGDGAGANYNQSYEFIVMAVNNNIVRISGGCLGFPVL.

The protein belongs to the NCLDV major capsid protein family. In terms of assembly, homotrimer.

The protein resides in the virion. Its function is as follows. Major capsid protein that self assembles to form an icosahedral capsid. Represents around 50% of the total virion protein mass. The protein is Major capsid protein (MCP) of Invertebrate iridescent virus 3 (IIV-3).